A 97-amino-acid chain; its full sequence is MTLFSSISSISNPMTSSKSSISSFGSGTSMGSNSIACGGGCGGSGGILGLGLGLGLGLDLTGGSRSRGACGNGGNSGNGNGGMGGGNGPCCGGCCGI.

Residues 1 to 29 (MTLFSSISSISNPMTSSKSSISSFGSGTS) are disordered.

It belongs to the hssA/B family.

This chain is HssA/B-like protein 38 (hssl38), found in Dictyostelium discoideum (Social amoeba).